Here is a 606-residue protein sequence, read N- to C-terminus: MTIRGLVGEAPTKNQEMLNWIEEAVELFQPESVVFCDGSEEEWNELAEQLVEHGTLIKLDEEAQPNSFLARSNPSDVARVESRTFICSKTEEDAGPTNNWMDPEQMRAEMREHFSGSMKGRRMYIVPFCMGPITDPSPKLGIEITDSPYVVMSMRIMTRMGKEALDKIGENGEFVKGLHSVGAPLEPGQEDSTWPCNDTKYITHFPEDREIWSYGSGYGGNAILAKKCYALRIASAMARDEGWMAEHMLILKLISPEDKAYYICAAFPSACGKTNLAMIQPTIPGWRAEVVGDDIAWLHFGEDGRLYAVNPENGFFGVAPGTNYASNPMAMKSMEPGNTLYTNVALTDDNNVWWESKEGEPQHLIDWLGNEWTPDSGNKAAHPNSRYCVPIEQCPVAAPEFNDPKGVPVSAILFGGRRADTVPLVTQARDWNHATFIGATLASGQTAAAAEAAVGSLRHDPMAMLPFIGYNAGDYLQHWIDMGNKGGDKMPEVFLVNWFRRGEDGRFLWPGFGENSRVLKWIIDRIEGRVEADETVVGYTARYEDIYTDGLKETEEDIREALSVNPADWERDLADNEEWLKFLGPKVPSEVWDEFQGLKDRVEAAK.

Substrate-binding positions include R79 and 218 to 220 (YGG). The Mn(2+) site is built by K227 and H247. S269 contacts substrate. 270–275 (ACGKTN) is a binding site for GTP. Residue C271 is part of the active site. D294 contacts Mn(2+). Residue 384 to 386 (NSR) participates in substrate binding. GTP is bound by residues R386, R417, and 512 to 515 (FGEN).

It belongs to the phosphoenolpyruvate carboxykinase [GTP] family. In terms of assembly, monomer. The cofactor is Mn(2+).

The protein resides in the cytoplasm. It carries out the reaction oxaloacetate + GTP = phosphoenolpyruvate + GDP + CO2. The protein operates within carbohydrate biosynthesis; gluconeogenesis. Its function is as follows. Catalyzes the conversion of oxaloacetate (OAA) to phosphoenolpyruvate (PEP), the rate-limiting step in the metabolic pathway that produces glucose from lactate and other precursors derived from the citric acid cycle. The protein is Phosphoenolpyruvate carboxykinase [GTP] of Corynebacterium jeikeium (strain K411).